A 445-amino-acid polypeptide reads, in one-letter code: Phosphoglucosamine mutase 1 (445 aa).

Ser102 serves as the catalytic Phosphoserine intermediate. Residues Ser102, Asp241, Asp243, and Asp245 each coordinate Mg(2+). Ser102 is subject to Phosphoserine.

The protein belongs to the phosphohexose mutase family. The cofactor is Mg(2+). In terms of processing, activated by phosphorylation.

It carries out the reaction alpha-D-glucosamine 1-phosphate = D-glucosamine 6-phosphate. In terms of biological role, catalyzes the conversion of glucosamine-6-phosphate to glucosamine-1-phosphate. The protein is Phosphoglucosamine mutase 1 of Shewanella sp. (strain MR-4).